We begin with the raw amino-acid sequence, 60 residues long: Chromatin protein Cren7 (60 aa).

This sequence belongs to the Cren7 family. In terms of assembly, monomer. In terms of processing, methylated at multiple sites, to varying extents.

The protein localises to the chromosome. The protein resides in the cytoplasm. Its function is as follows. A chromatin protein, binds double-stranded DNA without sequence specificity. Constrains negative DNA supercoils. The sequence is that of Chromatin protein Cren7 from Saccharolobus islandicus (strain M.16.4 / Kamchatka #3) (Sulfolobus islandicus).